The primary structure comprises 81 residues: Cortexin-2 (81 aa).

A helical transmembrane segment spans residues 29–49 (TGFAFVGILCIFLGLLIIRCF).

Belongs to the cortexin family.

The protein resides in the membrane. The chain is Cortexin-2 (CTXN2) from Homo sapiens (Human).